A 319-amino-acid chain; its full sequence is MKPVFLDFEQPIAELTNKIDELRFVQDESAVDISDEIHRLQKKSNDLTKSIFSKLTPAQISQVSRHPQRPYTLDYIEALFTDFEELHGDRHFADDYAIVGGLARFNGQSVMVVGHQKGRDTKEKIRRNFGMPRPEGYRKALRLMKTAEKFGLPVMTFIDTPGAYPGIGAEERGQSEAIGKNLYELTRLRVPVLCTVIGEGGSGGALAVALGDYVNMLQYSTYSVISPEGCASILWKTAEKAADAAQALGITADRLQKLDLVDTVIKEPLGGAHRDFGQTMKNVKAVLEKQLHEAQSIPLADLLSRRFDRIMAYGKFSEQ.

A CoA carboxyltransferase C-terminal domain is found at 39 to 293 (RLQKKSNDLT…KAVLEKQLHE (255 aa)).

This sequence belongs to the AccA family. In terms of assembly, acetyl-CoA carboxylase is a heterohexamer composed of biotin carboxyl carrier protein (AccB), biotin carboxylase (AccC) and two subunits each of ACCase subunit alpha (AccA) and ACCase subunit beta (AccD).

The protein resides in the cytoplasm. The enzyme catalyses N(6)-carboxybiotinyl-L-lysyl-[protein] + acetyl-CoA = N(6)-biotinyl-L-lysyl-[protein] + malonyl-CoA. It functions in the pathway lipid metabolism; malonyl-CoA biosynthesis; malonyl-CoA from acetyl-CoA: step 1/1. Its function is as follows. Component of the acetyl coenzyme A carboxylase (ACC) complex. First, biotin carboxylase catalyzes the carboxylation of biotin on its carrier protein (BCCP) and then the CO(2) group is transferred by the carboxyltransferase to acetyl-CoA to form malonyl-CoA. This is Acetyl-coenzyme A carboxylase carboxyl transferase subunit alpha from Neisseria meningitidis serogroup B (strain ATCC BAA-335 / MC58).